Here is a 203-residue protein sequence, read N- to C-terminus: Mitotic spindle checkpoint component mad2 (203 aa).

In terms of domain architecture, HORMA spans 13 to 197; that stretch reads KGSSKLVSEF…TSMHKIDCQV (185 aa).

This sequence belongs to the MAD2 family. In terms of assembly, interacts with mad3 and slp1.

It is found in the nucleus. Its function is as follows. Feedback control that prevents cells with incompletely assembled spindles from leaving mitosis. It interacts with the anaphase promoting complex/cyclosome (APC/C) thereby inhibiting APC/C-dependent proteolysis, a step required for exit from mitosis. In Schizosaccharomyces pombe (strain 972 / ATCC 24843) (Fission yeast), this protein is Mitotic spindle checkpoint component mad2.